Consider the following 438-residue polypeptide: Ribosome biogenesis protein NOP53 (438 aa).

Disordered stretches follow at residues 1-23 (MVAG…WRKG) and 247-346 (HPKY…RKKE). Residues 12-21 (GSRHNKKYWR) show a composition bias toward basic residues. 3 stretches are compositionally biased toward basic and acidic residues: residues 265–288 (KSMK…MTKE), 297–318 (QKLD…DSHN), and 325–346 (LHKE…RKKE).

It belongs to the NOP53 family.

The protein localises to the nucleus. The protein resides in the nucleolus. It is found in the nucleoplasm. Functionally, may play a role in ribosome biogenesis, being required for integration of the 5S RNP into the ribosomal large subunit. This is Ribosome biogenesis protein NOP53 from Caenorhabditis elegans.